A 61-amino-acid polypeptide reads, in one-letter code: Photosystem II reaction center protein K (61 aa).

Residues 1 to 24 (MLNILSFIGICLNSFLYSSSFFVA) constitute a propeptide that is removed on maturation. A helical transmembrane segment spans residues 40-60 (MPVIPLFFFLLAFVWQAAVSF).

It belongs to the PsbK family. PSII is composed of 1 copy each of membrane proteins PsbA, PsbB, PsbC, PsbD, PsbE, PsbF, PsbH, PsbI, PsbJ, PsbK, PsbL, PsbM, PsbT, PsbX, PsbY, PsbZ, Psb30/Ycf12, at least 3 peripheral proteins of the oxygen-evolving complex and a large number of cofactors. It forms dimeric complexes.

The protein resides in the plastid. Its subcellular location is the chloroplast thylakoid membrane. Its function is as follows. One of the components of the core complex of photosystem II (PSII). PSII is a light-driven water:plastoquinone oxidoreductase that uses light energy to abstract electrons from H(2)O, generating O(2) and a proton gradient subsequently used for ATP formation. It consists of a core antenna complex that captures photons, and an electron transfer chain that converts photonic excitation into a charge separation. This Cucumis sativus (Cucumber) protein is Photosystem II reaction center protein K.